Here is a 283-residue protein sequence, read N- to C-terminus: 4-diphosphocytidyl-2-C-methyl-D-erythritol kinase (283 aa).

Lys10 is an active-site residue. Position 95–105 (95–105 (PVAAGLGGGSS)) interacts with ATP. The active site involves Asp137.

Belongs to the GHMP kinase family. IspE subfamily.

The enzyme catalyses 4-CDP-2-C-methyl-D-erythritol + ATP = 4-CDP-2-C-methyl-D-erythritol 2-phosphate + ADP + H(+). It functions in the pathway isoprenoid biosynthesis; isopentenyl diphosphate biosynthesis via DXP pathway; isopentenyl diphosphate from 1-deoxy-D-xylulose 5-phosphate: step 3/6. Catalyzes the phosphorylation of the position 2 hydroxy group of 4-diphosphocytidyl-2C-methyl-D-erythritol. This Limosilactobacillus fermentum (strain NBRC 3956 / LMG 18251) (Lactobacillus fermentum) protein is 4-diphosphocytidyl-2-C-methyl-D-erythritol kinase.